Reading from the N-terminus, the 360-residue chain is Photosystem II protein D1 (360 aa).

A run of 3 helical transmembrane segments spans residues 30 to 47, 119 to 134, and 143 to 157; these read YVGWFGVLMIPCLLAAAA, HFLIGISAYMGRQWEL, and WICVAYSAPVSAAFA. His119 is a binding site for chlorophyll a. Tyr127 lines the pheophytin a pocket. Positions 171 and 190 each coordinate [CaMn4O5] cluster. The helical transmembrane segment at 198 to 219 threads the bilayer; that stretch reads FHMAGVAGMFGGSLFSAMHGSL. Chlorophyll a is bound at residue His199. Residues His216 and 265–266 each bind a quinone; that span reads SF. Residue His216 coordinates Fe cation. His273 serves as a coordination point for Fe cation. A helical membrane pass occupies residues 275-289; the sequence is FLAVFPVVCVWLTSM. [CaMn4O5] cluster contacts are provided by His333, Glu334, Asp343, and Ala345. Residues 346-360 constitute a propeptide that is removed on maturation; the sequence is AAESTTVALSAPAIG.

Belongs to the reaction center PufL/M/PsbA/D family. In terms of assembly, PSII is composed of 1 copy each of membrane proteins PsbA, PsbB, PsbC, PsbD, PsbE, PsbF, PsbH, PsbI, PsbJ, PsbK, PsbL, PsbM, PsbT, PsbX, PsbY, Psb30/Ycf12, peripheral proteins PsbO, CyanoQ (PsbQ), PsbU, PsbV and a large number of cofactors. It forms dimeric complexes. The D1/D2 heterodimer binds P680, chlorophylls that are the primary electron donor of PSII, and subsequent electron acceptors. It shares a non-heme iron and each subunit binds pheophytin, quinone, additional chlorophylls, carotenoids and lipids. D1 provides most of the ligands for the Mn4-Ca-O5 cluster of the oxygen-evolving complex (OEC). There is also a Cl(-1) ion associated with D1 and D2, which is required for oxygen evolution. The PSII complex binds additional chlorophylls, carotenoids and specific lipids. is required as a cofactor. Tyr-162 forms a radical intermediate that is referred to as redox-active TyrZ, YZ or Y-Z. Post-translationally, C-terminally processed by CtpA; processing is essential to allow assembly of the oxygen-evolving complex and thus photosynthetic growth.

The protein resides in the cellular thylakoid membrane. The catalysed reaction is 2 a plastoquinone + 4 hnu + 2 H2O = 2 a plastoquinol + O2. Photosystem II (PSII) is a light-driven water:plastoquinone oxidoreductase that uses light energy to abstract electrons from H(2)O, generating O(2) and a proton gradient subsequently used for ATP formation. It consists of a core antenna complex that captures photons, and an electron transfer chain that converts photonic excitation into a charge separation. The D1/D2 (PsbA/PsbD) reaction center heterodimer binds P680, the primary electron donor of PSII as well as several subsequent electron acceptors. This chain is Photosystem II protein D1, found in Prochlorococcus marinus (strain MIT 9312).